Consider the following 261-residue polypeptide: Small ribosomal subunit protein eS1 (261 aa).

A compositionally biased stretch (basic residues) spans 1–18 (MAVGKNKRISKGKKGGKK). A disordered region spans residues 1-20 (MAVGKNKRISKGKKGGKKKA).

Belongs to the eukaryotic ribosomal protein eS1 family. In terms of assembly, component of the small ribosomal subunit. Mature ribosomes consist of a small (40S) and a large (60S) subunit. The 40S subunit contains about 33 different proteins and 1 molecule of RNA (18S). The 60S subunit contains about 49 different proteins and 3 molecules of RNA (25S, 5.8S and 5S).

The protein localises to the cytoplasm. This is Small ribosomal subunit protein eS1 from Catharanthus roseus (Madagascar periwinkle).